Reading from the N-terminus, the 90-residue chain is Small ribosomal subunit protein uS15c (90 aa).

It belongs to the universal ribosomal protein uS15 family. Part of the 30S ribosomal subunit.

The protein localises to the plastid. It localises to the chloroplast. The sequence is that of Small ribosomal subunit protein uS15c (rps15) from Panax ginseng (Korean ginseng).